The sequence spans 1823 residues: Laminin subunit alpha-4 (1823 aa).

A signal peptide spans 1–24; the sequence is MALSSAWRSVLPLWLLWSAACSRA. O-linked (Xyl...) (chondroitin sulfate) serine glycosylation occurs at serine 39. 12 disulfide bridges follow: cysteine 82/cysteine 91, cysteine 84/cysteine 98, cysteine 101/cysteine 110, cysteine 113/cysteine 129, cysteine 132/cysteine 146, cysteine 134/cysteine 155, cysteine 157/cysteine 166, cysteine 169/cysteine 184, cysteine 187/cysteine 202, cysteine 189/cysteine 209, cysteine 212/cysteine 221, and cysteine 224/cysteine 238. Laminin EGF-like domains are found at residues 82–131, 132–186, and 187–240; these read CDCN…FCQP, CPCP…TCKK, and CDCS…NCAV. A glycan (N-linked (GlcNAc...) asparagine) is linked at asparagine 104. A glycan (N-linked (GlcNAc...) asparagine) is linked at asparagine 215. One can recognise a Laminin EGF-like 4; truncated domain in the interval 241–255; it reads CNCGGGPCDSVTGEC. The segment at 256 to 832 is domain II and I; sequence LEEGFEPPTG…AQTRSVASKI (577 aa). N-linked (GlcNAc...) asparagine glycosylation occurs at asparagine 315. The stretch at 320 to 403 forms a coiled coil; the sequence is LLKTKLSERE…KIQEINNKML (84 aa). N-linked (GlcNAc...) asparagine glycosylation is present at asparagine 465. Residues 473-528 are a coiled coil; the sequence is VVLEQLDDYNAKLSDLQEALDQALNYVRDAEDMNRATAARQRDHEKQQERVREQME. N-linked (GlcNAc...) asparagine glycans are attached at residues asparagine 531, asparagine 557, asparagine 578, asparagine 581, asparagine 638, and asparagine 646. The stretch at 581-614 forms a coiled coil; sequence NLSHDLVQEAIDHAQDLQQEANELSRKLHSSDMN. Positions 662–724 form a coiled coil; it reads IIYHKDESEN…AVKQLQAAER (63 aa). The short motif at 724–726 is the Cell attachment site element; sequence RGD. N-linked (GlcNAc...) asparagine glycosylation is found at asparagine 742, asparagine 758, asparagine 761, asparagine 787, and asparagine 810. The stretch at 777 to 806 forms a coiled coil; it reads AVNSARDAVRNLTEVVPQLLDQLRTVEQKR. Laminin G-like domains follow at residues 833 to 1035, 1047 to 1227, and 1234 to 1402; these read QVSM…SVPC, AASY…GYGC, and SRRA…LYEC. Residues cysteine 1005 and cysteine 1035 are joined by a disulfide bond. Residue asparagine 1093 is glycosylated (N-linked (GlcNAc...) asparagine). The cysteines at positions 1201 and 1227 are disulfide-linked. N-linked (GlcNAc...) asparagine glycosylation is found at asparagine 1288 and asparagine 1366. Cysteines 1370 and 1402 form a disulfide. The N-linked (GlcNAc...) asparagine glycan is linked to asparagine 1418. The segment at 1419 to 1440 is disordered; that stretch reads LSKPKASQNKKGGKSKDAPSWD. Laminin G-like domains follow at residues 1469-1640 and 1647-1820; these read AYQY…VTPC and TGTY…INSC. 2 disulfide bridges follow: cysteine 1617-cysteine 1640 and cysteine 1792-cysteine 1820.

Laminin is a complex glycoprotein, consisting of three different polypeptide chains (alpha, beta, gamma), which are bound to each other by disulfide bonds into a cross-shaped molecule comprising one long and three short arms with globules at each end. Alpha-4 is a subunit of laminin-8 (laminin-411), laminin-9 (laminin-421) and laminin-14 (laminin-423). As to expression, detected in placenta (at protein level). Detected in fibroblasts and urine (at protein level). In adult, strong expression in heart, lung, ovary small and large intestines, placenta, liver; weak or no expression in skeletal muscle, kidney, pancreas, testis, prostate, brain. High expression in fetal lung and kidney. Expression in fetal and newborn tissues is observed in certain mesenchymal cells in tissues such as smooth muscle and dermis.

The protein resides in the secreted. It localises to the extracellular space. It is found in the extracellular matrix. Its subcellular location is the basement membrane. Binding to cells via a high affinity receptor, laminin is thought to mediate the attachment, migration and organization of cells into tissues during embryonic development by interacting with other extracellular matrix components. The sequence is that of Laminin subunit alpha-4 (LAMA4) from Homo sapiens (Human).